Reading from the N-terminus, the 464-residue chain is Arginine biosynthesis bifunctional protein ArgJ, mitochondrial (464 aa).

6 residues coordinate substrate: T191, K220, T231, E318, N459, and T464. Catalysis depends on T231, which acts as the Nucleophile.

This sequence belongs to the ArgJ family. As to quaternary structure, heterodimer of an alpha and a beta chain. In terms of processing, the alpha and beta chains are autoproteolytically processed from a single precursor protein within the mitochondrion.

It localises to the mitochondrion matrix. The catalysed reaction is N(2)-acetyl-L-ornithine + L-glutamate = N-acetyl-L-glutamate + L-ornithine. The enzyme catalyses L-glutamate + acetyl-CoA = N-acetyl-L-glutamate + CoA + H(+). It participates in amino-acid biosynthesis; L-arginine biosynthesis; L-ornithine and N-acetyl-L-glutamate from L-glutamate and N(2)-acetyl-L-ornithine (cyclic): step 1/1. The protein operates within amino-acid biosynthesis; L-arginine biosynthesis; N(2)-acetyl-L-ornithine from L-glutamate: step 1/4. Catalyzes two activities which are involved in the cyclic version of arginine biosynthesis: the synthesis of acetylglutamate from glutamate and acetyl-CoA, and of ornithine by transacetylation between acetylornithine and glutamate. The chain is Arginine biosynthesis bifunctional protein ArgJ, mitochondrial from Pyricularia oryzae (strain 70-15 / ATCC MYA-4617 / FGSC 8958) (Rice blast fungus).